A 504-amino-acid chain; its full sequence is ATP synthase subunit alpha (504 aa).

169-176 (GDRQTGKT) is an ATP binding site.

Belongs to the ATPase alpha/beta chains family. As to quaternary structure, F-type ATPases have 2 components, CF(1) - the catalytic core - and CF(0) - the membrane proton channel. CF(1) has five subunits: alpha(3), beta(3), gamma(1), delta(1), epsilon(1). CF(0) has three main subunits: a(1), b(2) and c(9-12). The alpha and beta chains form an alternating ring which encloses part of the gamma chain. CF(1) is attached to CF(0) by a central stalk formed by the gamma and epsilon chains, while a peripheral stalk is formed by the delta and b chains.

It localises to the cell membrane. It catalyses the reaction ATP + H2O + 4 H(+)(in) = ADP + phosphate + 5 H(+)(out). Functionally, produces ATP from ADP in the presence of a proton gradient across the membrane. The alpha chain is a regulatory subunit. In Clostridium botulinum (strain Loch Maree / Type A3), this protein is ATP synthase subunit alpha.